Here is a 447-residue protein sequence, read N- to C-terminus: Secretin receptor (447 aa).

The first 28 residues, 1–28 (MLSTMSPRLSLLLLWLLLLINAAHPVGA), serve as a signal peptide directing secretion. Over 29 to 140 (LPRLCDVRRV…NERRHAYLLK (112 aa)) the chain is Extracellular. 3 cysteine pairs are disulfide-bonded: Cys-46–Cys-74, Cys-65–Cys-106, and Cys-88–Cys-122. Asn-71, Asn-99, Asn-105, and Asn-127 each carry an N-linked (GlcNAc...) asparagine glycan. Residues 141 to 166 (LKVMYTVGYSSSLAMLLVALSILCSF) traverse the membrane as a helical segment. The Cytoplasmic portion of the chain corresponds to 167 to 173 (RRLHCTR). Residues 174–194 (NYIHMHLFVSFILRALSNFIK) traverse the membrane as a helical segment. Over 195–215 (DAVLFPADDVTYCDAHRAGCK) the chain is Extracellular. Cys-214 and Cys-284 are joined by a disulfide. Residues 216-238 (LVMIFFQYCIMANYAWLLVEGLY) form a helical membrane-spanning segment. Residues 239–253 (LHTLLAISFFSERKC) lie on the Cytoplasmic side of the membrane. A helical transmembrane segment spans residues 254–275 (LQAFVLFGWGSPAIFVALWAVT). Over 276–290 (RHFLEDFGCWDINSN) the chain is Extracellular. The N-linked (GlcNAc...) asparagine glycan is linked to Asn-290. A helical membrane pass occupies residues 291–314 (ASIWWVIRGPVILSIVINFIFFIN). The Cytoplasmic segment spans residues 315–339 (ILRILMRKLRTQETRGNETHHYKRL). A helical transmembrane segment spans residues 340-355 (AKSTLLLIPLFGIHYI). Residues 356–366 (VFAFSPEGAME) lie on the Extracellular side of the membrane. Residues 367–390 (VQLFFELALGSFQGLVVAVLYCFL) form a helical membrane-spanning segment. Topologically, residues 391–447 (NGELEVQKKWRQWHLQEFPLRPVALSNSFSNATNGPTHSTKAGTSEQSRSIPGANVI) are cytoplasmic. A compositionally biased stretch (polar residues) spans 423 to 440 (TNGPTHSTKAGTSEQSRS). The segment at 423 to 447 (TNGPTHSTKAGTSEQSRSIPGANVI) is disordered.

Belongs to the G-protein coupled receptor 2 family. In terms of processing, phosphorylated on Ser and Thr residues at the cytoplasmic C-terminus by G protein-coupled receptor kinases (GRKs). In terms of tissue distribution, in brain, expressed in the hippocampal CA1 region, the lower layer of cerebral cortex, the anterior olfactory nuclei, the anterior ventrolateral thalamus, the lateral region of hypothalamus, substantia nigra, tegmental area and central nucleus of the inferior colliculus, the ventral supramamillary nucleus and the cerebellum. Expressed in brown adipocytes: expression predominates in mature brown adipocytes (at protein level). Detected in the renal medulla, where it localized predominantly on the basolateral membranes of cells in the collecting ducts (blue arrow) and the ascending thick segments of the loop of Henle.

It is found in the cell membrane. Its subcellular location is the basolateral cell membrane. Its function is as follows. G protein-coupled receptor activated by secretin (SCT), which is involved in different processes such as regulation of the pH of the duodenal content, food intake and water homeostasis. Ligand binding causes a conformation change that triggers signaling via guanine nucleotide-binding proteins (G proteins) and activates cAMP-dependent pathway. Upon binding to secretin, regulates the pH of the duodenum by (1) inhibiting the secretion of gastric acid from the parietal cells of the stomach and (2) stimulating the production of bicarbonate (NaHCO(3)) from the ductal cells of the pancreas. In addition to regulating the pH of the duodenal content, plays a central role in diet induced thermogenesis: acts as a non-sympathetic brown fat (BAT) activator mediating prandial thermogenesis, which consequentially induces satiation. Mechanistically, secretin released by the gut after a meal binds to secretin receptor (SCTR) in brown adipocytes, activating brown fat thermogenesis by stimulating lipolysis, which is sensed in the brain and promotes satiation. Also able to stimulate lipolysis in white adipocytes. Also plays an important role in cellular osmoregulation by regulating renal water reabsorption. Also plays a role in the central nervous system: required for synaptic plasticity. The chain is Secretin receptor from Mus musculus (Mouse).